A 1061-amino-acid chain; its full sequence is Ceruloplasmin (1061 aa).

The signal sequence occupies residues methionine 1–alanine 19. 6 consecutive Plastocyanin-like domains span residues arginine 20–cysteine 199, lysine 208–cysteine 356, histidine 369–cysteine 555, arginine 565–cysteine 713, glycine 725–cysteine 895, and phenylalanine 903–glutamate 1057. 3 residues coordinate Na(+): tyrosine 55, glycine 64, and tyrosine 67. Histidine 120 and histidine 122 together coordinate Cu(2+). Histidine 120 contributes to the O2 binding site. Lysine 128 contacts Ca(2+). Asparagine 138 carries N-linked (GlcNAc...) asparagine glycosylation. Positions 143, 146, and 147 each coordinate Ca(2+). Cysteine 173 and cysteine 199 are joined by a disulfide. The Cu(2+) site is built by histidine 179 and histidine 181. Histidine 179 is an O2 binding site. N-linked (GlcNAc...) asparagine glycosylation is present at asparagine 226. Position 255 (serine 255) interacts with Na(+). Cysteine 275 and cysteine 356 are joined by a disulfide. Cu(2+)-binding residues include histidine 294, cysteine 337, and histidine 342. Asparagine 396 is a glycosylation site (N-linked (GlcNAc...) asparagine). Na(+) is bound by residues phenylalanine 407, glycine 416, and tyrosine 419. Cysteine 529 and cysteine 555 are oxidised to a cystine. An N-linked (GlcNAc...) asparagine glycan is attached at asparagine 583. Na(+) is bound at residue serine 612. Cysteines 632 and 713 form a disulfide. Positions 651, 694, 699, and 704 each coordinate Cu(2+). Cysteine 694 acts as the Nucleophile; for glutathione peroxidase activity in catalysis. Asparagine 757 carries an N-linked (GlcNAc...) asparagine glycan. The Na(+) site is built by phenylalanine 762, glycine 771, and tyrosine 774. Cysteine 869 and cysteine 895 are joined by a disulfide. Asparagine 921 carries an N-linked (GlcNAc...) asparagine glycan. Serine 950 lines the Na(+) pocket. Cu(2+) is bound by residues histidine 989, histidine 992, histidine 994, histidine 1034, cysteine 1035, histidine 1036, histidine 1040, and methionine 1045. Positions 992 and 994 each coordinate O2. Histidine 1036 lines the O2 pocket.

This sequence belongs to the multicopper oxidase family. Found in a complex with MPO and LTF; interacts directly with MPO and LTF, which allows Fe(3+) incorporation into LTF, activation of CP ferroxidase activity and protection of CP antioxidant properties by MPO. The cofactor is Cu(2+). Expressed in many tissues, including liver, eye and brain.

The protein localises to the secreted. It catalyses the reaction 4 Fe(2+) + O2 + 4 H(+) = 4 Fe(3+) + 2 H2O. The catalysed reaction is 4 Cu(+) + O2 + 4 H(+) = 4 Cu(2+) + 2 H2O. The enzyme catalyses a hydroperoxide + 2 glutathione = an alcohol + glutathione disulfide + H2O. It carries out the reaction 4 nitric oxide + O2 + 2 H2O = 4 nitrite + 4 H(+). It catalyses the reaction 2 glutathione + H2O2 = glutathione disulfide + 2 H2O. Its function is as follows. Multifunctional blue, copper-binding (6-7 atoms per molecule) glycoprotein. It has ferroxidase activity oxidizing Fe(2+) to Fe(3+) without releasing radical oxygen species. It is involved in iron transport across the cell membrane. Copper ions provide a large number of enzymatic activites. Oxidizes highly toxic ferrous ions to the ferric state for further incorporation onto apo-transferrins, catalyzes Cu(+) oxidation and promotes the oxidation of biogenic amines such as norepinephrin and serotonin. Provides Cu(2+) ions for the ascorbate-mediated deaminase degradation of the heparan sulfate chains of GPC1. Has glutathione peroxidase-like activity, can remove both hydrogen peroxide and lipid hydroperoxide in the presence of thiols. Also shows NO-oxidase and NO2 synthase activities that determine endocrine NO homeostasis. In Mus musculus (Mouse), this protein is Ceruloplasmin (Cp).